We begin with the raw amino-acid sequence, 356 residues long: Guanine nucleotide-binding protein alpha-17 subunit (356 aa).

Residue Gly-2 is the site of N-myristoyl glycine attachment. Cys-4 carries S-palmitoyl cysteine lipidation. Residues 32 to 356 enclose the G-alpha domain; that stretch reads SIVKLLLLGA…QKNLQKAGMM (325 aa). Residues 35–48 are G1 motif; sequence KLLLLGAGECGKST. GTP contacts are provided by residues 40 to 47, 177 to 183, 202 to 206, 271 to 274, and Ala-328; these read GAGECGKS, LYSRVAT, DVGGQ, and NKKD. Ser-47 and Thr-183 together coordinate Mg(2+). Positions 175-183 are G2 motif; it reads DILYSRVAT. A G3 motif region spans residues 198-207; that stretch reads FRVFDVGGQR. The tract at residues 267–274 is G4 motif; that stretch reads ILFMNKKD. The tract at residues 326–331 is G5 motif; that stretch reads TCATDT.

Belongs to the G-alpha family. In terms of assembly, g proteins are composed of 3 units; alpha, beta and gamma. The alpha chain contains the guanine nucleotide binding site.

The protein localises to the cell projection. The protein resides in the cilium. It localises to the dendrite. Guanine nucleotide-binding proteins (G proteins) are involved as modulators or transducers in various transmembrane signaling systems. This specific G-alpha subunit plays an important role in olfaction and in cilia morphogenesis. Involved in chemotactic responses to attractants diacetyl, pyrazine, 2,4,5-trimethylthiazole, benzaldehyde, isoamyl alcohol, butanone and 2,3-pentanedione. Displays a redundant function with gpa-3 in chemotactic responses. Involved in avoidance responses to copper, sodium dodecyl sulfate and linoleic acid. Involved in osmotic avoidance and mechanosensory responses. Involved in specifying fan-like morphology of cilia of head sensory neurons AWC. This chain is Guanine nucleotide-binding protein alpha-17 subunit (odr-3), found in Caenorhabditis briggsae.